The chain runs to 276 residues: Glutamate racemase (276 aa).

Residues 9-10 (DS) and 41-42 (YG) each bind substrate. Residue Cys-72 is the Proton donor/acceptor of the active site. 73 to 74 (NT) provides a ligand contact to substrate. The Proton donor/acceptor role is filled by Cys-183. 184–185 (TH) is a substrate binding site.

The protein belongs to the aspartate/glutamate racemases family.

It carries out the reaction L-glutamate = D-glutamate. It functions in the pathway cell wall biogenesis; peptidoglycan biosynthesis. In terms of biological role, provides the (R)-glutamate required for cell wall biosynthesis. This Shouchella clausii (strain KSM-K16) (Alkalihalobacillus clausii) protein is Glutamate racemase.